The sequence spans 1021 residues: Phytosulfokine receptor 1 (1021 aa).

Residues 1 to 24 form the signal peptide; that stretch reads MGVLRVYVILILVGFCVQIVVVNS. The LRR 1 repeat unit spans residues 21–43; that stretch reads VVNSQNLTCNSNDLKALEGFMRG. Residues N26, N54, and N83 are each glycosylated (N-linked (GlcNAc...) asparagine). 16 LRR repeats span residues 85-109, 110-133, 135-156, 158-180, 181-205, 206-229, 231-252, 253-277, 301-325, 326-349, 351-372, 373-397, 402-426, 428-448, 449-474, and 476-496; these read SGRVVELELGRRKLSGKLSESVAKL, DQLKVLNLTHNSLSGSIAASLLNL, NLEVLDLSSNDFSGLFPSLINL, SLRVLNVYENSFHGLIPASLCNN, LPRIREIDLAMNYFDGSIPVGIGNC, SSVEYLGLASNNLSGSIPQELFQL, NLSVLALQNNRLSGALSSKLGK, LSNLGRLDISSNKFSGKIPDVFLEL, SRSISLLSLRNNTLSGQIYLNCSAM, TNLTSLDLASNSFSGSIPSNLPNC, RLKTINFAKIKFIAQIPESFKN, FQSLTSLSFSNSSIQNISSALEILQ, LKTLVLTLNFQKEELPSVPSLQFKN, KVLIIASCQLRGTVPQWLSNS, PSLQLLDLSWNQLSGTIPPWLGSLNS, and FYLDLSNNTFIGEIPHSLTSL. 2 N-linked (GlcNAc...) asparagine glycosylation sites follow: N116 and N132. N204, N217, and N231 each carry an N-linked (GlcNAc...) asparagine glycan. N311, N321, and N327 each carry an N-linked (GlcNAc...) asparagine glycan. N-linked (GlcNAc...) asparagine glycosylation is found at N383 and N388. 5 N-linked (GlcNAc...) asparagine glycosylation sites follow: N482, N546, N568, N576, and N592. Residues 498–555 form an LRR 18; atypical repeat; the sequence is SLVSKENAVEEPSPDFPFFKKKNTNAGGLQYNQPSSFPPMIDLSYNSLNGSIWPEFGD. LRR repeat units follow at residues 556–580, 581–604, and 606–629; these read LRQLHVLNLKNNNLSGNIPANLSGM, TSLEVLDLSHNNLSGNIPPSLVKL, and FLSTFSVAYNKLSGPIPTGVQFQT. N632 is a glycosylation site (N-linked (GlcNAc...) asparagine). The helical transmembrane segment at 673–693 threads the bilayer; it reads VAVGTGLGTVFLLTVTLLIIL. One can recognise a Protein kinase domain in the interval 743–1014; sequence FNQANIIGCG…PTTQQLVSWL (272 aa). ATP contacts are provided by residues 749 to 757 and K771; that span reads IGCGGFGLV. D869 (proton acceptor) is an active-site residue.

Belongs to the protein kinase superfamily. Ser/Thr protein kinase family. N-glycosylated. In terms of tissue distribution, expressed ubiquitously in leaf, apical meristem, hypocotyl and root.

It is found in the cell membrane. The catalysed reaction is L-seryl-[protein] + ATP = O-phospho-L-seryl-[protein] + ADP + H(+). It carries out the reaction L-threonyl-[protein] + ATP = O-phospho-L-threonyl-[protein] + ADP + H(+). In terms of biological role, phytosulfokine receptor with a serine/threonine-protein kinase activity. Regulates, in response to phytosulfokine binding, a signaling cascade involved in plant cell differentiation, organogenesis and somatic embryogenesis. In Daucus carota (Wild carrot), this protein is Phytosulfokine receptor 1 (PSKR).